The primary structure comprises 223 residues: UPF0173 metal-dependent hydrolase TV0864 (223 aa).

The protein belongs to the UPF0173 family.

In Thermoplasma volcanium (strain ATCC 51530 / DSM 4299 / JCM 9571 / NBRC 15438 / GSS1), this protein is UPF0173 metal-dependent hydrolase TV0864.